Consider the following 490-residue polypeptide: MSRFDTLLQSIARTTVLCVGDLMLDEFVYGEVSRISPEAPTPVIAVQRSEINVGGAGNVARNIAAIGARCIFVGLIGDDEAGRTLSAEIARESRIEPLLVCDPARPTTRKVRFVSEHFSTHMLRADWETASAASSEIEQRLLDAILPQLQRADIVLLSDYAKGVLTERVIVSVIEAARKLGKRVIVDPKSANFAIYRGATLLTPNRKEFVSATRSAAETVDDIAAAAQDAMALADCEAMLVTQSEHGMTLVPRVGEPIHVPAMPVKVRDVSGAGDTVAAVLAVVLAAGADWATAMRAASAAAAVAVSKNGTAVVTPAELRRKILPHASLAAEEKIIGSEAELDLRLAEWRREGLRVGFTNGCFDILHPGHVKVLTAARGACDRLIVGLNSDASVRRLKGESRPVQNERARAEVLAALEAVDLVAIFGEDTPLKLIKRIVPSVLVKGGDYTREQVVGHEIVAARGGEVLLVDVLPGFSTTSLVEKAREGTT.

The ribokinase stretch occupies residues 1–330 (MSRFDTLLQS…RKILPHASLA (330 aa)). ATP is bound at residue 205-208 (NRKE). Asp275 is an active-site residue. Positions 358 to 490 (FTNGCFDILH…LVEKAREGTT (133 aa)) are cytidylyltransferase.

In the N-terminal section; belongs to the carbohydrate kinase PfkB family. This sequence in the C-terminal section; belongs to the cytidylyltransferase family. As to quaternary structure, homodimer.

The enzyme catalyses D-glycero-beta-D-manno-heptose 7-phosphate + ATP = D-glycero-beta-D-manno-heptose 1,7-bisphosphate + ADP + H(+). It carries out the reaction D-glycero-beta-D-manno-heptose 1-phosphate + ATP + H(+) = ADP-D-glycero-beta-D-manno-heptose + diphosphate. The protein operates within nucleotide-sugar biosynthesis; ADP-L-glycero-beta-D-manno-heptose biosynthesis; ADP-L-glycero-beta-D-manno-heptose from D-glycero-beta-D-manno-heptose 7-phosphate: step 1/4. It functions in the pathway nucleotide-sugar biosynthesis; ADP-L-glycero-beta-D-manno-heptose biosynthesis; ADP-L-glycero-beta-D-manno-heptose from D-glycero-beta-D-manno-heptose 7-phosphate: step 3/4. Functionally, catalyzes the phosphorylation of D-glycero-D-manno-heptose 7-phosphate at the C-1 position to selectively form D-glycero-beta-D-manno-heptose-1,7-bisphosphate. Its function is as follows. Catalyzes the ADP transfer from ATP to D-glycero-beta-D-manno-heptose 1-phosphate, yielding ADP-D-glycero-beta-D-manno-heptose. This is Bifunctional protein HldE from Rhodopseudomonas palustris (strain BisB5).